The following is a 280-amino-acid chain: MALKSYKPTTPGQRGLVLIDRSELWKGRPVKSLTEGLTKSGGRNNTGRITSRRRGGGAKRLYRIVDFKRNKFDVAATVERIEYDPNRTAFIALVKYEDGEQAYILAPQRLAVGDKVIASAKADIKPGNAMPFSGMPIGTIVHNIEMKPGKGGQIARAAGTYAQFVGRDGGYAQIRLSSGELRLVRQECMATVGAVSNPDNSNQNYGKAGRMRHKGKRPSVRGVVMNPIDHPHGGGEGRTSGGRHPVTPWGKPTKGKRTRNTNKASQKLIIRSRHAKKKGR.

Disordered stretches follow at residues 33–55 and 199–266; these read LTEGLTKSGGRNNTGRITSRRRG and DNSN…KASQ. A compositionally biased stretch (basic residues) spans 209 to 219; sequence GRMRHKGKRPS.

The protein belongs to the universal ribosomal protein uL2 family. As to quaternary structure, part of the 50S ribosomal subunit. Forms a bridge to the 30S subunit in the 70S ribosome.

One of the primary rRNA binding proteins. Required for association of the 30S and 50S subunits to form the 70S ribosome, for tRNA binding and peptide bond formation. It has been suggested to have peptidyltransferase activity; this is somewhat controversial. Makes several contacts with the 16S rRNA in the 70S ribosome. This chain is Large ribosomal subunit protein uL2, found in Ruegeria sp. (strain TM1040) (Silicibacter sp.).